A 500-amino-acid polypeptide reads, in one-letter code: Protein O-glucosyltransferase 2 (500 aa).

Residues 1 to 22 (MLRKLLLLLMSCIIFLTRRSKA) form the signal peptide. The Filamin repeat unit spans residues 23-128 (AAAASASKTL…LVGKSPYVLR (106 aa)). N-linked (GlcNAc...) asparagine glycans are attached at residues Asn60 and Asn259. Residues 497–500 (RDEL) carry the Prevents secretion from ER motif.

Belongs to the KDELC family.

The protein localises to the endoplasmic reticulum lumen. It catalyses the reaction L-seryl-[EGF-like domain protein] + UDP-alpha-D-glucose = 3-O-(beta-D-glucosyl)-L-seryl-[EGF-like domain protein] + UDP + H(+). The catalysed reaction is L-seryl-[EGF-like domain protein] + UDP-alpha-D-xylose = 3-O-(beta-D-xylosyl)-L-seryl-[EGF-like domain protein] + UDP + H(+). Its pathway is protein modification; protein glycosylation. In terms of biological role, protein glucosyltransferase that catalyzes the transfer of glucose from UDP-glucose to a serine residue within the consensus sequence peptide C-X-N-T-X-G-S-F-X-C. Can also catalyze the transfer of xylose from UDP-xylose but less efficiently. The polypeptide is Protein O-glucosyltransferase 2 (poglut2) (Danio rerio (Zebrafish)).